We begin with the raw amino-acid sequence, 279 residues long: S-methyl-5'-thioadenosine phosphorylase (279 aa).

Phosphate is bound by residues Ser13, 55–56, and 88–89; these read RH and TA. Met191 is a substrate binding site. Thr192 contacts phosphate. 215–217 is a substrate binding site; it reads DYD.

Belongs to the PNP/MTAP phosphorylase family. MTAP subfamily. Homotrimer.

It localises to the cytoplasm. The protein resides in the nucleus. The catalysed reaction is S-methyl-5'-thioadenosine + phosphate = 5-(methylsulfanyl)-alpha-D-ribose 1-phosphate + adenine. It participates in amino-acid biosynthesis; L-methionine biosynthesis via salvage pathway; S-methyl-5-thio-alpha-D-ribose 1-phosphate from S-methyl-5'-thioadenosine (phosphorylase route): step 1/1. Its function is as follows. Catalyzes the reversible phosphorylation of S-methyl-5'-thioadenosine (MTA) to adenine and 5-methylthioribose-1-phosphate. Involved in the breakdown of MTA, a major by-product of polyamine biosynthesis. Responsible for the first step in the methionine salvage pathway after MTA has been generated from S-adenosylmethionine. Has broad substrate specificity with 6-aminopurine nucleosides as preferred substrates. In Aedes aegypti (Yellowfever mosquito), this protein is S-methyl-5'-thioadenosine phosphorylase.